Reading from the N-terminus, the 46-residue chain is Esculentin-1a/b (46 aa).

Cysteines 40 and 46 form a disulfide.

The protein belongs to the frog skin active peptide (FSAP) family. Esculentin subfamily. Expressed by the skin glands.

It is found in the secreted. In terms of biological role, antimicrobial peptide. Stimulates insulin secretion by BRIN-BD11 cells in vitro. Shows hemolytic activity. The chain is Esculentin-1a/b from Pelophylax ridibundus (Marsh frog).